Here is a 377-residue protein sequence, read N- to C-terminus: Chaperone protein DnaJ (377 aa).

The J domain occupies 4-69 (DYYEALGVER…QKRAAYDRFG (66 aa)). The CR-type zinc finger occupies 135-213 (GKTAQIRVPT…CHGQGRVTQE (79 aa)). Zn(2+) is bound by residues C148, C151, C165, C168, C187, C190, C201, and C204. 4 CXXCXGXG motif repeats span residues 148 to 155 (CDECSGSG), 165 to 172 (CTMCSGSG), 187 to 194 (CPTCNGRG), and 201 to 208 (CGKCHGQG).

This sequence belongs to the DnaJ family. As to quaternary structure, homodimer. Requires Zn(2+) as cofactor.

Its subcellular location is the cytoplasm. Its function is as follows. Participates actively in the response to hyperosmotic and heat shock by preventing the aggregation of stress-denatured proteins and by disaggregating proteins, also in an autonomous, DnaK-independent fashion. Unfolded proteins bind initially to DnaJ; upon interaction with the DnaJ-bound protein, DnaK hydrolyzes its bound ATP, resulting in the formation of a stable complex. GrpE releases ADP from DnaK; ATP binding to DnaK triggers the release of the substrate protein, thus completing the reaction cycle. Several rounds of ATP-dependent interactions between DnaJ, DnaK and GrpE are required for fully efficient folding. Also involved, together with DnaK and GrpE, in the DNA replication of plasmids through activation of initiation proteins. The protein is Chaperone protein DnaJ of Brucella anthropi (strain ATCC 49188 / DSM 6882 / CCUG 24695 / JCM 21032 / LMG 3331 / NBRC 15819 / NCTC 12168 / Alc 37) (Ochrobactrum anthropi).